The sequence spans 380 residues: Putative 8-amino-7-oxononanoate synthase (380 aa).

Arg-18 provides a ligand contact to substrate. 106–107 (GY) serves as a coordination point for pyridoxal 5'-phosphate. His-131 contacts substrate. Pyridoxal 5'-phosphate contacts are provided by residues Ser-179, 205–208 (DEAH), and 236–239 (TFGK). Position 239 is an N6-(pyridoxal phosphate)lysine (Lys-239). Thr-352 contacts substrate.

The protein belongs to the class-II pyridoxal-phosphate-dependent aminotransferase family. BioF subfamily. As to quaternary structure, homodimer. It depends on pyridoxal 5'-phosphate as a cofactor.

The catalysed reaction is 6-carboxyhexanoyl-[ACP] + L-alanine + H(+) = (8S)-8-amino-7-oxononanoate + holo-[ACP] + CO2. It participates in cofactor biosynthesis; biotin biosynthesis. Functionally, catalyzes the decarboxylative condensation of pimeloyl-[acyl-carrier protein] and L-alanine to produce 8-amino-7-oxononanoate (AON), [acyl-carrier protein], and carbon dioxide. This chain is Putative 8-amino-7-oxononanoate synthase (bioF), found in Neisseria meningitidis serogroup B (strain ATCC BAA-335 / MC58).